The sequence spans 945 residues: Isoleucine--tRNA ligase (945 aa).

A 'HIGH' region motif is present at residues 66 to 76 (PYANGDIHLGH). Glu-581 provides a ligand contact to L-isoleucyl-5'-AMP. The short motif at 622-626 (KMSKS) is the 'KMSKS' region element. Lys-625 provides a ligand contact to ATP. Residues Cys-908, Cys-911, Cys-928, and Cys-931 each coordinate Zn(2+).

This sequence belongs to the class-I aminoacyl-tRNA synthetase family. IleS type 1 subfamily. As to quaternary structure, monomer. It depends on Zn(2+) as a cofactor.

The protein localises to the cytoplasm. It catalyses the reaction tRNA(Ile) + L-isoleucine + ATP = L-isoleucyl-tRNA(Ile) + AMP + diphosphate. Catalyzes the attachment of isoleucine to tRNA(Ile). As IleRS can inadvertently accommodate and process structurally similar amino acids such as valine, to avoid such errors it has two additional distinct tRNA(Ile)-dependent editing activities. One activity is designated as 'pretransfer' editing and involves the hydrolysis of activated Val-AMP. The other activity is designated 'posttransfer' editing and involves deacylation of mischarged Val-tRNA(Ile). This chain is Isoleucine--tRNA ligase, found in Paraburkholderia phytofirmans (strain DSM 17436 / LMG 22146 / PsJN) (Burkholderia phytofirmans).